The primary structure comprises 356 residues: 5-formaminoimidazole-4-carboxamide-1-(beta)-D-ribofuranosyl 5'-monophosphate synthetase (356 aa).

Residues His-27 and Ser-94 each coordinate 5-amino-1-(5-phospho-beta-D-ribosyl)imidazole-4-carboxamide. The ATP-grasp domain occupies 101-333 (TENFADMAVP…YADLMEENLS (233 aa)). Residues 145 to 196 (PHDI…TRYY) and Glu-226 each bind ATP. Asn-255 provides a ligand contact to 5-amino-1-(5-phospho-beta-D-ribosyl)imidazole-4-carboxamide. 2 residues coordinate Mg(2+): Glu-293 and Glu-306.

It belongs to the phosphohexose mutase family. Mg(2+) serves as cofactor. Mn(2+) is required as a cofactor.

It carries out the reaction 5-amino-1-(5-phospho-beta-D-ribosyl)imidazole-4-carboxamide + formate + ATP = 5-formamido-1-(5-phospho-D-ribosyl)imidazole-4-carboxamide + ADP + phosphate. Its pathway is purine metabolism; IMP biosynthesis via de novo pathway; 5-formamido-1-(5-phospho-D-ribosyl)imidazole-4-carboxamide from 5-amino-1-(5-phospho-D-ribosyl)imidazole-4-carboxamide (formate route): step 1/1. Catalyzes the ATP- and formate-dependent formylation of 5-aminoimidazole-4-carboxamide-1-beta-d-ribofuranosyl 5'-monophosphate (AICAR) to 5-formaminoimidazole-4-carboxamide-1-beta-d-ribofuranosyl 5'-monophosphate (FAICAR) in the absence of folates. The polypeptide is 5-formaminoimidazole-4-carboxamide-1-(beta)-D-ribofuranosyl 5'-monophosphate synthetase (Methanosarcina barkeri (strain Fusaro / DSM 804)).